A 205-amino-acid polypeptide reads, in one-letter code: Recombination protein RecR (205 aa).

The C4-type zinc finger occupies 64–79 (CRRCFNITVDELCPIC). The Toprim domain maps to 87 to 182 (TKICVVEEPL…RVTRPARGLP (96 aa)).

This sequence belongs to the RecR family.

May play a role in DNA repair. It seems to be involved in an RecBC-independent recombinational process of DNA repair. It may act with RecF and RecO. The chain is Recombination protein RecR from Chloroflexus aggregans (strain MD-66 / DSM 9485).